A 749-amino-acid polypeptide reads, in one-letter code: Putative Xaa-Pro aminopeptidase FRA1 (749 aa).

Residues 1 to 33 are disordered; sequence MTSKPSTSDGRAHSISHVPGTHMRGTSASHSPR. S69, S92, and S95 each carry phosphoserine. Mn(2+) is bound by residues D551, D562, E660, and E674.

The protein belongs to the peptidase M24B family. In terms of assembly, homodimer. Interacts with FRA2. It depends on Mn(2+) as a cofactor.

The protein localises to the cytoplasm. The enzyme catalyses Release of any N-terminal amino acid, including proline, that is linked to proline, even from a dipeptide or tripeptide.. Involved in the regulation of the iron regulon in responss to decreased mitochondrial iron-sulfur cluster synthesis. The chain is Putative Xaa-Pro aminopeptidase FRA1 (FRA1) from Saccharomyces cerevisiae (strain ATCC 204508 / S288c) (Baker's yeast).